Reading from the N-terminus, the 213-residue chain is Orotate phosphoribosyltransferase (213 aa).

Lysine 26 lines the 5-phospho-alpha-D-ribose 1-diphosphate pocket. 34 to 35 contacts orotate; that stretch reads FF. Residues 72-73, arginine 99, lysine 100, lysine 103, histidine 105, and 124-132 contribute to the 5-phospho-alpha-D-ribose 1-diphosphate site; these read YK and DDVITAGTA. Residues threonine 128 and arginine 156 each contribute to the orotate site.

This sequence belongs to the purine/pyrimidine phosphoribosyltransferase family. PyrE subfamily. As to quaternary structure, homodimer. Mg(2+) serves as cofactor.

The catalysed reaction is orotidine 5'-phosphate + diphosphate = orotate + 5-phospho-alpha-D-ribose 1-diphosphate. The protein operates within pyrimidine metabolism; UMP biosynthesis via de novo pathway; UMP from orotate: step 1/2. Catalyzes the transfer of a ribosyl phosphate group from 5-phosphoribose 1-diphosphate to orotate, leading to the formation of orotidine monophosphate (OMP). This chain is Orotate phosphoribosyltransferase, found in Salmonella paratyphi A (strain ATCC 9150 / SARB42).